We begin with the raw amino-acid sequence, 44 residues long: Photosystem I reaction center subunit IX (44 aa).

A helical membrane pass occupies residues 7-27 (YLSVAPVISTLWFGSLAGLLI).

Belongs to the PsaJ family.

It localises to the plastid. The protein localises to the chloroplast thylakoid membrane. In terms of biological role, may help in the organization of the PsaE and PsaF subunits. This chain is Photosystem I reaction center subunit IX, found in Populus alba (White poplar).